The chain runs to 571 residues: Urease subunit alpha (571 aa).

One can recognise a Urease domain in the interval 132–571 (GGIDSHIHFI…LPMAQRYFLF (440 aa)). 3 residues coordinate Ni(2+): H137, H139, and K220. An N6-carboxylysine modification is found at K220. Residue H222 coordinates substrate. Residues H249 and H275 each coordinate Ni(2+). H323 serves as the catalytic Proton donor. D363 is a binding site for Ni(2+).

The protein belongs to the metallo-dependent hydrolases superfamily. Urease alpha subunit family. Heterotrimer of UreA (gamma), UreB (beta) and UreC (alpha) subunits. Three heterotrimers associate to form the active enzyme. Ni cation serves as cofactor. Carboxylation allows a single lysine to coordinate two nickel ions.

Its subcellular location is the cytoplasm. The catalysed reaction is urea + 2 H2O + H(+) = hydrogencarbonate + 2 NH4(+). It participates in nitrogen metabolism; urea degradation; CO(2) and NH(3) from urea (urease route): step 1/1. The chain is Urease subunit alpha from Kocuria rhizophila (strain ATCC 9341 / DSM 348 / NBRC 103217 / DC2201).